The chain runs to 348 residues: Phosphoribosylformylglycinamidine cyclo-ligase (348 aa).

Belongs to the AIR synthase family.

It is found in the cytoplasm. It catalyses the reaction 2-formamido-N(1)-(5-O-phospho-beta-D-ribosyl)acetamidine + ATP = 5-amino-1-(5-phospho-beta-D-ribosyl)imidazole + ADP + phosphate + H(+). Its pathway is purine metabolism; IMP biosynthesis via de novo pathway; 5-amino-1-(5-phospho-D-ribosyl)imidazole from N(2)-formyl-N(1)-(5-phospho-D-ribosyl)glycinamide: step 2/2. The sequence is that of Phosphoribosylformylglycinamidine cyclo-ligase from Ruegeria sp. (strain TM1040) (Silicibacter sp.).